Consider the following 102-residue polypeptide: Small ribosomal subunit protein uS10 (102 aa).

The protein belongs to the universal ribosomal protein uS10 family. Part of the 30S ribosomal subunit.

Functionally, involved in the binding of tRNA to the ribosomes. This Sulfurihydrogenibium sp. (strain YO3AOP1) protein is Small ribosomal subunit protein uS10.